Reading from the N-terminus, the 373-residue chain is Valienol-1-phosphate guanylyltransferase (373 aa).

Substrate is bound by residues Gly177 and 192–193 (EK).

It belongs to the bacterial/plant glucose-1-phosphate adenylyltransferase family. Mg(2+) serves as cofactor.

The enzyme catalyses valienol 1-phosphate + GTP + H(+) = GDP-valienol + diphosphate. In terms of biological role, involved in the biosynthesis of the antifungal agent validamycin A. Catalyzes the conversion of valienol 1-phosphate to GDP-valienol and less effectively to ADP-valienol or other NDP derivatives. This Streptomyces hygroscopicus subsp. limoneus protein is Valienol-1-phosphate guanylyltransferase.